Here is a 185-residue protein sequence, read N- to C-terminus: Ribosome-recycling factor (185 aa).

It belongs to the RRF family.

The protein localises to the cytoplasm. Its function is as follows. Responsible for the release of ribosomes from messenger RNA at the termination of protein biosynthesis. May increase the efficiency of translation by recycling ribosomes from one round of translation to another. This is Ribosome-recycling factor from Francisella tularensis subsp. holarctica (strain FTNF002-00 / FTA).